The chain runs to 540 residues: Patellin-4 (540 aa).

S53 bears the Phosphoserine mark. Residues 61-183 (FADLKESEKK…EKKTEDVVTE (123 aa)) adopt a coiled-coil conformation. Positions 89–140 (LKTKKKESSPMKEKKEEVVKPEAEVEKKKEEAAEEKVEEEKKSEAVVTEEAP) are disordered. Positions 94–140 (KESSPMKEKKEEVVKPEAEVEKKKEEAAEEKVEEEKKSEAVVTEEAP) are enriched in basic and acidic residues. K249 participates in a covalent cross-link: Glycyl lysine isopeptide (Lys-Gly) (interchain with G-Cter in ubiquitin). The 171-residue stretch at 258–428 (GEEFGEDLAT…QYGGFKTVDD (171 aa)) folds into the CRAL-TRIO domain. In terms of domain architecture, GOLD spans 433-534 (NETVSEVVVK…KKKVLYRYRT (102 aa)).

This sequence belongs to the patellin family.

It localises to the membrane. The protein localises to the cytoplasm. Functionally, carrier protein that may be involved in membrane-trafficking events associated with cell plate formation during cytokinesis. Binds to some hydrophobic molecules such as phosphoinositides and promotes their transfer between the different cellular sites. In Arabidopsis thaliana (Mouse-ear cress), this protein is Patellin-4 (PATL4).